Here is a 79-residue protein sequence, read N- to C-terminus: Conotoxin Cal9.2a (79 aa).

The signal sequence occupies residues 1–23; it reads MNCYLILTVALLLTSAMTGTTTA. The propeptide occupies 24-33; the sequence is GQLNKKGVTL. 3 disulfide bridges follow: Cys-41–Cys-58, Cys-46–Cys-68, and Cys-48–Cys-73.

In terms of tissue distribution, expressed by the venom duct.

Its subcellular location is the secreted. Functionally, probable neurotoxin with unknown target. Possibly targets ion channels. This chain is Conotoxin Cal9.2a, found in Californiconus californicus (California cone).